A 397-amino-acid chain; its full sequence is Argininosuccinate synthase (397 aa).

9–17 (AYSGGLDTS) provides a ligand contact to ATP. Tyrosine 86 serves as a coordination point for L-citrulline. Glycine 116 provides a ligand contact to ATP. 3 residues coordinate L-aspartate: threonine 118, asparagine 122, and aspartate 123. Asparagine 122 serves as a coordination point for L-citrulline. L-citrulline-binding residues include arginine 126, serine 174, glutamate 259, and tyrosine 271.

Belongs to the argininosuccinate synthase family. Type 1 subfamily. Homotetramer.

It localises to the cytoplasm. It catalyses the reaction L-citrulline + L-aspartate + ATP = 2-(N(omega)-L-arginino)succinate + AMP + diphosphate + H(+). Its pathway is amino-acid biosynthesis; L-arginine biosynthesis; L-arginine from L-ornithine and carbamoyl phosphate: step 2/3. The sequence is that of Argininosuccinate synthase from Lactococcus lactis subsp. cremoris (strain SK11).